A 478-amino-acid polypeptide reads, in one-letter code: Solute carrier family 49 member 4 (478 aa).

Residues Met-1–Thr-27 are disordered. The Cytoplasmic segment spans residues Met-1–Arg-51. Positions Leu-15–Leu-16 match the Di-leucine motif; mediates lysosomal localization motif. Residues Trp-52–Trp-72 traverse the membrane as a helical segment. The Lumenal segment spans residues Gly-73–Asp-89. The chain crosses the membrane as a helical span at residues Ile-90 to Leu-110. The Cytoplasmic portion of the chain corresponds to Leu-111–Arg-117. A helical membrane pass occupies residues Ile-118 to Val-138. Over Ser-139–Gln-152 the chain is Lumenal. The helical transmembrane segment at Ile-153–Trp-173 threads the bilayer. At Phe-174–Ala-184 the chain is on the cytoplasmic side. The helical transmembrane segment at Ile-185–Val-205 threads the bilayer. Over Pro-206 to Glu-229 the chain is Lumenal. A glycan (N-linked (GlcNAc...) asparagine) is linked at Asn-209. A helical transmembrane segment spans residues Thr-230–Phe-250. At Pro-251–Arg-281 the chain is on the cytoplasmic side. Residues Phe-282–Val-302 form a helical membrane-spanning segment. The Lumenal segment spans residues Leu-303–Gln-314. The helical transmembrane segment at Val-315–Met-335 threads the bilayer. The Cytoplasmic segment spans residues Ala-336–Lys-347. Residues Leu-348–Cys-368 form a helical membrane-spanning segment. The Lumenal portion of the chain corresponds to Leu-369–Ala-384. A helical membrane pass occupies residues Ser-385–Val-405. Over Glu-406–Gly-414 the chain is Cytoplasmic. Residues Ile-415–Val-435 traverse the membrane as a helical segment. The Lumenal segment spans residues Thr-436–Leu-442. The helical transmembrane segment at Ser-443–Phe-463 threads the bilayer. At Arg-464–Val-478 the chain is on the cytoplasmic side.

The protein belongs to the major facilitator superfamily. Cleaved in lysosomes by cathepsin L between Leu-214 and Ala-261, generating a N-glycosylated N-terminal and a non-glycosylated C-terminal fragment.

The protein localises to the lysosome membrane. It catalyses the reaction pyridoxine(out) + n H(+)(out) = pyridoxine(in) + n H(+)(in). Its function is as follows. Mediates H(+)-dependent pyridoxine transport. This chain is Solute carrier family 49 member 4 (Slc49a4), found in Rattus norvegicus (Rat).